A 210-amino-acid polypeptide reads, in one-letter code: dTTP/UTP pyrophosphatase (210 aa).

Aspartate 85 functions as the Proton acceptor in the catalytic mechanism.

Belongs to the Maf family. YhdE subfamily. It depends on a divalent metal cation as a cofactor.

Its subcellular location is the cytoplasm. It catalyses the reaction dTTP + H2O = dTMP + diphosphate + H(+). The catalysed reaction is UTP + H2O = UMP + diphosphate + H(+). In terms of biological role, nucleoside triphosphate pyrophosphatase that hydrolyzes dTTP and UTP. May have a dual role in cell division arrest and in preventing the incorporation of modified nucleotides into cellular nucleic acids. The polypeptide is dTTP/UTP pyrophosphatase (Saccharophagus degradans (strain 2-40 / ATCC 43961 / DSM 17024)).